Consider the following 84-residue polypeptide: MAACTAQVLSLYRKLMKESNKFPSYNYRTYALRRVQDAFRANRSVEDPKMVEQLLNQGRDNLDMIRRQVAIGKMYPTQKTIVEG.

Belongs to the complex I LYR family.

This Salmo salar (Atlantic salmon) protein is LYR motif-containing protein 4B (lyrm4b).